The chain runs to 101 residues: NADH-quinone oxidoreductase subunit K (101 aa).

Transmembrane regions (helical) follow at residues 4–24 (LAHYLVLGAILFAMSIVGIFL), 29–49 (IIIILMAIELMLLAVNTNFVA), and 61–81 (IFVFFVLTVAAAEAAIGLAIL).

It belongs to the complex I subunit 4L family. In terms of assembly, NDH-1 is composed of 14 different subunits. Subunits NuoA, H, J, K, L, M, N constitute the membrane sector of the complex.

It localises to the cell inner membrane. It carries out the reaction a quinone + NADH + 5 H(+)(in) = a quinol + NAD(+) + 4 H(+)(out). NDH-1 shuttles electrons from NADH, via FMN and iron-sulfur (Fe-S) centers, to quinones in the respiratory chain. The immediate electron acceptor for the enzyme in this species is believed to be ubiquinone. Couples the redox reaction to proton translocation (for every two electrons transferred, four hydrogen ions are translocated across the cytoplasmic membrane), and thus conserves the redox energy in a proton gradient. The protein is NADH-quinone oxidoreductase subunit K of Burkholderia vietnamiensis (strain G4 / LMG 22486) (Burkholderia cepacia (strain R1808)).